Reading from the N-terminus, the 565-residue chain is Cytokinin dehydrogenase 2 (565 aa).

The N-terminal stretch at 1-20 (MKQEQVRMAVLLMLNCFVKA) is a signal peptide. Asparagine 64 carries N-linked (GlcNAc...) asparagine glycosylation. Residues 74–255 (RLAAAAAVLY…TRARIPLAPA (182 aa)) form the FAD-binding PCMH-type domain. The FAD site is built by alanine 108, glycine 110, and glycine 112. Histidine 113 is modified (pros-8alpha-FAD histidine). 7 residues coordinate FAD: serine 114, glutamine 118, aspartate 179, threonine 184, serine 190, isoleucine 194, and isoleucine 245. N-linked (GlcNAc...) asparagine glycosylation is present at asparagine 464. FAD contacts are provided by tyrosine 517, serine 554, and glutamine 557.

The protein belongs to the oxygen-dependent FAD-linked oxidoreductase family. In terms of assembly, monomer. FAD is required as a cofactor. In terms of processing, glycosylated. As to expression, mostly expressed in leaves, culms, inflorescence meristems, and flowers, especially in vascular tissues.

The protein localises to the secreted. It localises to the extracellular space. The catalysed reaction is N(6)-dimethylallyladenine + A + H2O = 3-methyl-2-butenal + adenine + AH2. Its function is as follows. Catalyzes the oxidation of cytokinins, a family of N(6)-substituted adenine derivatives that are plant hormones, where the substituent is an isopentenyl group. Is a major QTL involved in grain yield. Modulates the number of reproductive organs by regulating the cytokinin accumulation in inflorescence meristems. Acts as negative regulator of panicle branching. This chain is Cytokinin dehydrogenase 2, found in Oryza sativa subsp. japonica (Rice).